The sequence spans 535 residues: Doublesex- and mab-3-related transcription factor A2 (535 aa).

Residues 69–116 constitute a DNA-binding region (DM); the sequence is CARCRNHGVVSALKGHKRYCRWKDCLCAKCTLIAERQRVMAAQVALRR. The tract at residues 200–315 is disordered; the sequence is LQAGRPGSPQ…GGPGPRQRTP (116 aa). The region spanning 313–348 is the DMA domain; the sequence is RTPLDILTRVFPGHRRGVLELVLQGCGGDVVQAIEQ.

This sequence belongs to the DMRT family.

The protein localises to the nucleus. Functionally, may be involved in sexual development. The protein is Doublesex- and mab-3-related transcription factor A2 (DMRTA2) of Bos taurus (Bovine).